Consider the following 711-residue polypeptide: DNA topoisomerase 1 (711 aa).

Positions 3–134 constitute a Toprim domain; it reads KNLVVIESPN…KCQRITFNEI (132 aa). Mg(2+)-binding residues include Glu9 and Asp102. A Topo IA-type catalytic domain is found at 150-604; the sequence is DQSWVQSQFA…FWSNFKEEVK (455 aa). The interval 183 to 188 is interaction with DNA; it reads SAGRVQ. Tyr340 functions as the O-(5'-phospho-DNA)-tyrosine intermediate in the catalytic mechanism. C4-type zinc fingers lie at residues 624 to 652 and 673 to 702; these read CPSC…FPNC and CPEC…FPRC.

Belongs to the type IA topoisomerase family. As to quaternary structure, monomer. Mg(2+) is required as a cofactor.

The catalysed reaction is ATP-independent breakage of single-stranded DNA, followed by passage and rejoining.. Releases the supercoiling and torsional tension of DNA, which is introduced during the DNA replication and transcription, by transiently cleaving and rejoining one strand of the DNA duplex. Introduces a single-strand break via transesterification at a target site in duplex DNA. The scissile phosphodiester is attacked by the catalytic tyrosine of the enzyme, resulting in the formation of a DNA-(5'-phosphotyrosyl)-enzyme intermediate and the expulsion of a 3'-OH DNA strand. The free DNA strand then undergoes passage around the unbroken strand, thus removing DNA supercoils. Finally, in the religation step, the DNA 3'-OH attacks the covalent intermediate to expel the active-site tyrosine and restore the DNA phosphodiester backbone. The polypeptide is DNA topoisomerase 1 (Mycoplasma pneumoniae (strain ATCC 29342 / M129 / Subtype 1) (Mycoplasmoides pneumoniae)).